A 115-amino-acid chain; its full sequence is uncharacterized protein (115 aa).

The tract at residues 1 to 86 (RRPARSGGDG…LSSQLVRPSR (86 aa)) is disordered.

This is an uncharacterized protein from Homo sapiens (Human).